Reading from the N-terminus, the 137-residue chain is Small ribosomal subunit protein eS17 (137 aa).

The protein belongs to the eukaryotic ribosomal protein eS17 family. Component of the small ribosomal subunit. Mature ribosomes consist of a small (40S) and a large (60S) subunit. The 40S subunit contains about 32 different proteins and 1 molecule of RNA (18S). The 60S subunit contains 45 different proteins and 3 molecules of RNA (25S, 5.8S and 5S).

The protein localises to the cytoplasm. In terms of biological role, component of the ribosome, a large ribonucleoprotein complex responsible for the synthesis of proteins in the cell. The small ribosomal subunit (SSU) binds messenger RNAs (mRNAs) and translates the encoded message by selecting cognate aminoacyl-transfer RNA (tRNA) molecules. The large subunit (LSU) contains the ribosomal catalytic site termed the peptidyl transferase center (PTC), which catalyzes the formation of peptide bonds, thereby polymerizing the amino acids delivered by tRNAs into a polypeptide chain. The nascent polypeptides leave the ribosome through a tunnel in the LSU and interact with protein factors that function in enzymatic processing, targeting, and the membrane insertion of nascent chains at the exit of the ribosomal tunnel. The polypeptide is Small ribosomal subunit protein eS17 (RPS17B) (Candida albicans (strain SC5314 / ATCC MYA-2876) (Yeast)).